The sequence spans 206 residues: Protein DEHYDRATION-INDUCED 19 (206 aa).

Thr105 carries the phosphothreonine modification. The residue at position 107 (Ser107) is a Phosphoserine. The tract at residues 142-167 is disordered; the sequence is SSFISPTRSQSSPAPRQTKNVSEDKQ. Residues 143 to 161 are compositionally biased toward polar residues; it reads SFISPTRSQSSPAPRQTKN.

The protein belongs to the Di19 family. Interacts with ADO2/LKP2, CPK11 and CPK4. Weak interaction with CPK12 and no interactions with CPK1, CPK5 or CPK26. Phosphorylated within the NLS/NES region. Expressed in seedlings, roots, leaves, stems, flowers and siliques.

The protein localises to the nucleus. This is Protein DEHYDRATION-INDUCED 19 (DI19-1) from Arabidopsis thaliana (Mouse-ear cress).